We begin with the raw amino-acid sequence, 481 residues long: (S)-N-methylcoclaurine 3'-hydroxylase isozyme 1 (481 aa).

Position 423 (C423) interacts with heme.

The protein belongs to the cytochrome P450 family. Heme serves as cofactor. Restricted to the parietal region of sieve elements adjacent or proximal to laticifers in roots, stems, leaves, carpels and hypocotyls.

Its subcellular location is the endoplasmic reticulum. It catalyses the reaction (S)-N-methylcoclaurine + reduced [NADPH--hemoprotein reductase] + O2 = (S)-3'-hydroxy-N-methylcoclaurine + oxidized [NADPH--hemoprotein reductase] + H2O + H(+). The protein operates within alkaloid biosynthesis; (S)-reticuline biosynthesis; (S)-reticuline from (S)-norcoclaurine: step 3/4. Its function is as follows. Cytochrome P450 monooxygenase involved in the biosynthesis of benzylisoquinoline alkaloids. Catalyzes the 3'-hydroxylation of (S)-N-methylcoclaurine. The polypeptide is (S)-N-methylcoclaurine 3'-hydroxylase isozyme 1 (Papaver somniferum (Opium poppy)).